A 221-amino-acid chain; its full sequence is MNHEGLRVMGIDPGLTRCGLSVVQAGRGRTVYPVSVGVVRTPPDAELAERLLRLSKAVGEWMDEYTPDVIAIERVFERGNVSTVMNTAHAVGVLILAAAERGLPVHMYTPSEVKKAISGNGRADKKQMTVMITRILGLGEPPKPADAADALSLAVCHCWRAPMLMRAQSQYSEQELEKRRRVQQGKLGKAKSTYNAEQAQSHASDPAKAAHPSQFQRTDTN.

Catalysis depends on residues aspartate 12, glutamate 73, and aspartate 146. Mg(2+) contacts are provided by aspartate 12, glutamate 73, and aspartate 146. The tract at residues 169–221 (SQYSEQELEKRRRVQQGKLGKAKSTYNAEQAQSHASDPAKAAHPSQFQRTDTN) is disordered. Residues 192–203 (STYNAEQAQSHA) show a composition bias toward polar residues.

This sequence belongs to the RuvC family. As to quaternary structure, homodimer which binds Holliday junction (HJ) DNA. The HJ becomes 2-fold symmetrical on binding to RuvC with unstacked arms; it has a different conformation from HJ DNA in complex with RuvA. In the full resolvosome a probable DNA-RuvA(4)-RuvB(12)-RuvC(2) complex forms which resolves the HJ. Requires Mg(2+) as cofactor.

The protein resides in the cytoplasm. It catalyses the reaction Endonucleolytic cleavage at a junction such as a reciprocal single-stranded crossover between two homologous DNA duplexes (Holliday junction).. Its function is as follows. The RuvA-RuvB-RuvC complex processes Holliday junction (HJ) DNA during genetic recombination and DNA repair. Endonuclease that resolves HJ intermediates. Cleaves cruciform DNA by making single-stranded nicks across the HJ at symmetrical positions within the homologous arms, yielding a 5'-phosphate and a 3'-hydroxyl group; requires a central core of homology in the junction. The consensus cleavage sequence is 5'-(A/T)TT(C/G)-3'. Cleavage occurs on the 3'-side of the TT dinucleotide at the point of strand exchange. HJ branch migration catalyzed by RuvA-RuvB allows RuvC to scan DNA until it finds its consensus sequence, where it cleaves and resolves the cruciform DNA. The polypeptide is Crossover junction endodeoxyribonuclease RuvC (Corynebacterium glutamicum (strain ATCC 13032 / DSM 20300 / JCM 1318 / BCRC 11384 / CCUG 27702 / LMG 3730 / NBRC 12168 / NCIMB 10025 / NRRL B-2784 / 534)).